A 1212-amino-acid chain; its full sequence is Myosin-1 (1212 aa).

The tract at residues 1–35 (MGITRRGKDKAAAGQAVAGGASGGRARPKKATFET) is disordered. The 675-residue stretch at 41-715 (VGVSDLTLLS…TLFALEHMRD (675 aa)) folds into the Myosin motor domain. 134-141 (GESGAGKT) serves as a coordination point for ATP. The actin-binding stretch occupies residues 405–487 (SVGILDIYGF…PGVFSALKDA (83 aa)). IQ domains are found at residues 719-739 (HNMATRIQRMWRAYLAYRAES) and 740-765 (ATRIQTFWRKKRTGAEYLQLRDHGHR). A TH1 domain is found at 773 to 962 (RRRMSILGSR…AVHTQQGEPP (190 aa)). Disordered regions lie at residues 947-1064 (DFYK…APPA) and 1115-1212 (PAAY…DDDW). A compositionally biased stretch (polar residues) spans 954–966 (VHTQQGEPPNSVS). Composition is skewed to low complexity over residues 987–998 (RPGGPNGRPARG) and 1008–1052 (PGGA…ASVR). Over residues 1053–1062 (APPPPPPAAP) the composition is skewed to pro residues. Residues 1065 to 1124 (KAKIMAKVLYDFAGQKENEMSIKEGDLIEIVQKENNGWWLAKSGNQQAWVPAAYVEEQKQ) form the SH3 domain. Pro residues predominate over residues 1125-1140 (APPPVAASRPPPPAPP). Residues 1171–1190 (MSLNGSDGSRSNTPTPSLGN) are compositionally biased toward polar residues.

The protein belongs to the TRAFAC class myosin-kinesin ATPase superfamily. Myosin family.

The protein resides in the cytoplasm. It is found in the cytoskeleton. The protein localises to the actin patch. Type-I myosin implicated in the organization of the actin cytoskeleton. Required for proper actin cytoskeleton polarization. At the cell cortex, assembles in patch-like structures together with proteins from the actin-polymerizing machinery and promotes actin assembly. Functions as actin nucleation-promoting factor (NPF) for the Arp2/3 complex. In Pyricularia oryzae (strain 70-15 / ATCC MYA-4617 / FGSC 8958) (Rice blast fungus), this protein is Myosin-1 (MYO1).